The following is a 148-amino-acid chain: Large ribosomal subunit protein uL11 (148 aa).

This sequence belongs to the universal ribosomal protein uL11 family. Part of the ribosomal stalk of the 50S ribosomal subunit. Interacts with L10 and the large rRNA to form the base of the stalk. L10 forms an elongated spine to which L12 dimers bind in a sequential fashion forming a multimeric L10(L12)X complex. One or more lysine residues are methylated.

Forms part of the ribosomal stalk which helps the ribosome interact with GTP-bound translation factors. This is Large ribosomal subunit protein uL11 from Myxococcus xanthus (strain DK1622).